We begin with the raw amino-acid sequence, 110 residues long: Ribonuclease P protein component 4 (110 aa).

Zn(2+)-binding residues include Cys-65, Cys-68, Cys-94, and Cys-97.

Belongs to the eukaryotic/archaeal RNase P protein component 4 family. Consists of a catalytic RNA component and at least 5 protein subunits. Zn(2+) is required as a cofactor.

The protein resides in the cytoplasm. It carries out the reaction Endonucleolytic cleavage of RNA, removing 5'-extranucleotides from tRNA precursor.. Part of ribonuclease P, a protein complex that generates mature tRNA molecules by cleaving their 5'-ends. This chain is Ribonuclease P protein component 4, found in Methanococcus maripaludis (strain DSM 14266 / JCM 13030 / NBRC 101832 / S2 / LL).